A 562-amino-acid polypeptide reads, in one-letter code: tRNA (guanine(37)-N(1))-methyltransferase (562 aa).

A mitochondrion-targeting transit peptide spans 1–41 (MLFRRFLNLTTKTPHLQTFRARHYFRNMSCPELIPPPTVRG). Residues histidine 243, 281–282 (DL), and asparagine 340 contribute to the S-adenosyl-L-methionine site. The span at 523–534 (AHIVAKKPEKKP) shows a compositional bias: basic and acidic residues. Residues 523–562 (AHIVAKKPEKKPLPAKPASKKNKNQANTKQVEAGLDKMQM) are disordered.

The protein belongs to the class I-like SAM-binding methyltransferase superfamily. TRM5/TYW2 family. In terms of assembly, monomer.

The protein localises to the mitochondrion matrix. It localises to the nucleus. Its subcellular location is the cytoplasm. It carries out the reaction guanosine(37) in tRNA + S-adenosyl-L-methionine = N(1)-methylguanosine(37) in tRNA + S-adenosyl-L-homocysteine + H(+). Its function is as follows. Specifically methylates the N1 position of guanosine-37 in various cytoplasmic and mitochondrial tRNAs. Methylation is not dependent on the nature of the nucleoside 5' of the target nucleoside. This is the first step in the biosynthesis of wybutosine (yW), a modified base adjacent to the anticodon of tRNAs and required for accurate decoding. The protein is tRNA (guanine(37)-N(1))-methyltransferase of Aedes aegypti (Yellowfever mosquito).